Reading from the N-terminus, the 223-residue chain is Putative lipoprotein NMB1126/NMB1164 (223 aa).

An N-terminal signal peptide occupies residues 1-19; that stretch reads MKTVSTAVVLAAAAVSLTG. Residue Cys20 is the site of N-palmitoyl cysteine attachment. Residue Cys20 is the site of S-diacylglycerol cysteine attachment.

Its subcellular location is the cell membrane. This chain is Putative lipoprotein NMB1126/NMB1164, found in Neisseria meningitidis serogroup B (strain ATCC BAA-335 / MC58).